A 309-amino-acid chain; its full sequence is Acetyl-coenzyme A carboxylase carboxyl transferase subunit beta (309 aa).

Positions 29–298 (NSDWTSCCKG…AINSSENETS (270 aa)) constitute a CoA carboxyltransferase N-terminal domain. Positions 35, 36, 52, and 55 each coordinate Zn(2+).

It belongs to the AccD/PCCB family. As to quaternary structure, acetyl-CoA carboxylase is a heterohexamer composed of biotin carboxyl carrier protein (AccB), biotin carboxylase (AccC) and two subunits each of ACCase subunit alpha (AccA) and ACCase subunit beta (AccD). It depends on Zn(2+) as a cofactor.

Its subcellular location is the cytoplasm. It catalyses the reaction N(6)-carboxybiotinyl-L-lysyl-[protein] + acetyl-CoA = N(6)-biotinyl-L-lysyl-[protein] + malonyl-CoA. Its pathway is lipid metabolism; malonyl-CoA biosynthesis; malonyl-CoA from acetyl-CoA: step 1/1. Its function is as follows. Component of the acetyl coenzyme A carboxylase (ACC) complex. Biotin carboxylase (BC) catalyzes the carboxylation of biotin on its carrier protein (BCCP) and then the CO(2) group is transferred by the transcarboxylase to acetyl-CoA to form malonyl-CoA. The chain is Acetyl-coenzyme A carboxylase carboxyl transferase subunit beta from Pelagibacter ubique (strain HTCC1062).